Here is a 91-residue protein sequence, read N- to C-terminus: Small ribosomal subunit protein uS19 (91 aa).

The protein belongs to the universal ribosomal protein uS19 family.

Functionally, protein S19 forms a complex with S13 that binds strongly to the 16S ribosomal RNA. This is Small ribosomal subunit protein uS19 from Alcanivorax borkumensis (strain ATCC 700651 / DSM 11573 / NCIMB 13689 / SK2).